The following is a 510-amino-acid chain: NAD(P)H-quinone oxidoreductase subunit 2, chloroplastic (510 aa).

Transmembrane regions (helical) follow at residues 24–44 (LLLF…GLIL), 59–79 (WFYF…LFRW), 99–119 (IFQF…VEYI), 124–144 (MAIT…MFLC), 149–169 (LITI…LSGY), 183–203 (YLLM…WLYG), 229–249 (ISIA…PAPF), 295–315 (WHLL…LIAI), 323–343 (MLAY…IVGD), 354–374 (YMLF…LFGL), 395–415 (ALSS…AGFF), and 418–438 (LYLF…IGLL).

Belongs to the complex I subunit 2 family. NDH is composed of at least 16 different subunits, 5 of which are encoded in the nucleus.

The protein resides in the plastid. It localises to the chloroplast thylakoid membrane. The catalysed reaction is a plastoquinone + NADH + (n+1) H(+)(in) = a plastoquinol + NAD(+) + n H(+)(out). The enzyme catalyses a plastoquinone + NADPH + (n+1) H(+)(in) = a plastoquinol + NADP(+) + n H(+)(out). NDH shuttles electrons from NAD(P)H:plastoquinone, via FMN and iron-sulfur (Fe-S) centers, to quinones in the photosynthetic chain and possibly in a chloroplast respiratory chain. The immediate electron acceptor for the enzyme in this species is believed to be plastoquinone. Couples the redox reaction to proton translocation, and thus conserves the redox energy in a proton gradient. The protein is NAD(P)H-quinone oxidoreductase subunit 2, chloroplastic of Ananas comosus (Pineapple).